Here is a 205-residue protein sequence, read N- to C-terminus: N-(5'-phosphoribosyl)anthranilate isomerase (205 aa).

Belongs to the TrpF family.

It carries out the reaction N-(5-phospho-beta-D-ribosyl)anthranilate = 1-(2-carboxyphenylamino)-1-deoxy-D-ribulose 5-phosphate. Its pathway is amino-acid biosynthesis; L-tryptophan biosynthesis; L-tryptophan from chorismate: step 3/5. The sequence is that of N-(5'-phosphoribosyl)anthranilate isomerase from Clostridium acetobutylicum (strain ATCC 824 / DSM 792 / JCM 1419 / IAM 19013 / LMG 5710 / NBRC 13948 / NRRL B-527 / VKM B-1787 / 2291 / W).